The primary structure comprises 634 residues: GTP-binding protein 4 (634 aa).

Alanine 2 is subject to N-acetylalanine. N6-acetyllysine; alternate is present on lysine 103. Lysine 103 participates in a covalent cross-link: Glycyl lysine isopeptide (Lys-Gly) (interchain with G-Cter in SUMO2); alternate. Serine 122 is subject to Phosphoserine. In terms of domain architecture, OBG-type G spans 169–340 (RTLLLCGYPN…VKTEACDRLL (172 aa)). GTP contacts are provided by residues 175–182 (GYPNVGKS), 221–225 (DTPGI), and 289–292 (NKCD). Residue lysine 332 forms a Glycyl lysine isopeptide (Lys-Gly) (interchain with G-Cter in SUMO2) linkage. Serine 468, serine 470, and serine 472 each carry phosphoserine. The disordered stretch occupies residues 495–517 (ILESKEKNTQGPRMPRTAKKVQR). An N6-acetyllysine modification is found at lysine 522. The disordered stretch occupies residues 529–634 (VDMDDKDDAH…KRKAGKKDRR (106 aa)). Lysine 534 participates in a covalent cross-link: Glycyl lysine isopeptide (Lys-Gly) (interchain with G-Cter in SUMO2). Basic residues predominate over residues 544-554 (RRSRSITRKRK). Serine 558 bears the Phosphoserine mark. The span at 560 to 572 (PPSSVARSGSCSR) shows a compositional bias: polar residues. Basic and acidic residues predominate over residues 573–585 (TPRDVSGLRDVKM). The span at 586 to 604 (VKKAKTMMKNAQKKMNRLG) shows a compositional bias: basic residues. Basic and acidic residues predominate over residues 605-618 (KKGEADRHVFDMKP). Basic residues predominate over residues 619–634 (KHLLSGKRKAGKKDRR).

Belongs to the TRAFAC class OBG-HflX-like GTPase superfamily. OBG GTPase family. NOG subfamily. In terms of assembly, associates with pre-60S ribosomal particles. Interacts with MINAS-60 (product of an alternative open reading frame of RBM10).

It is found in the nucleus. Its subcellular location is the nucleolus. Its function is as follows. Involved in the biogenesis of the 60S ribosomal subunit. Acts as a TP53 repressor, preventing TP53 stabilization and cell cycle arrest. This chain is GTP-binding protein 4, found in Homo sapiens (Human).